Consider the following 378-residue polypeptide: Alpha-(1,3)-fucosyltransferase fut-5 (378 aa).

Residues Met-1–Arg-7 are Cytoplasmic-facing. Residues Ala-8–Ser-28 traverse the membrane as a helical; Signal-anchor for type II membrane protein segment. At Tyr-29–Leu-378 the chain is on the lumenal side. Residues Asn-44, Asn-88, Asn-105, Asn-143, Asn-171, and Asn-307 are each glycosylated (N-linked (GlcNAc...) asparagine).

Belongs to the glycosyltransferase 10 family. The cofactor is Ca(2+). In terms of processing, N-glycosylated.

The protein localises to the golgi apparatus. Its subcellular location is the golgi stack membrane. The enzyme catalyses a beta-D-galactosyl-(1-&gt;3)-N-acetyl-beta-D-glucosaminyl derivative + GDP-beta-L-fucose = a beta-D-galactosyl-(1-&gt;3)-[alpha-L-fucosyl-(1-&gt;4)]-N-acetyl-beta-D-glucosaminyl derivative + GDP + H(+). The protein operates within protein modification; protein glycosylation. With respect to regulation, inhibited by Cu(2+) and Ni(2+), and to a lesser extent by EDTA, Mn(2+) and Mg(2+). Functionally, catalyzes the addition of fucose in alpha 1-3 linkage to GalNAc-beta-1-&gt;4-GlcNAc-beta-1-&gt;3-Gal-beta-1-&gt;4-Glc (LDNT)acceptor. Unlike fut-1, does not add fucose to Man-alpha-1-&gt;3-(Man-alpha-1-&gt;6)-Man-beta-1-&gt;4-GlcNAc-beta-1-&gt;4-GlcNAc-beta-1-Asn (M3), Man-alpha-1-&gt;3-(Man-alpha-1-&gt;6)-Man-beta-1-&gt;4-GlcNAc-beta-1-&gt;4-(Fuc-alpha-1-&gt;6)-GlcNAc-beta-1-Asn (M3F6) or GlcNAc-beta-1-&gt;2-Man-alpha-1-&gt;3-(GlcNAc-beta-1-&gt;2-Man-alpha-1-&gt;6)-Man-beta-1-4-GlcNAc-beta-1-&gt;4-(Fuc-alpha-1-&gt;6)-GlcNAc-beta-1-Asn (GnM3F6) acceptors. The sequence is that of Alpha-(1,3)-fucosyltransferase fut-5 from Caenorhabditis elegans.